Consider the following 86-residue polypeptide: Neuropeptide precursor capa-1 (86 aa).

An N-terminal signal peptide occupies residues 1–19 (MLLWIVATLLIFSLPVSTA).

In terms of tissue distribution, expressed in two pairs of neurons in the anterior part of the nervous system (at protein level).

Its function is as follows. Encodes at least three neuropeptides: two of the periviscerokinin family (APHPSSALLVPYPRV-amide and LYMARV-amide) and one pyrokinin (AFFYTPRI-amide). In terms of biological role, putative ligand for neuromedin U receptor homolog nmur-2. In Caenorhabditis elegans, this protein is Neuropeptide precursor capa-1.